Reading from the N-terminus, the 178-residue chain is Large ribosomal subunit protein uL13m (178 aa).

This sequence belongs to the universal ribosomal protein uL13 family. As to quaternary structure, component of the mitochondrial ribosome large subunit (39S) which comprises a 16S rRNA and about 50 distinct proteins. Interacts with OXA1L.

The protein resides in the mitochondrion. This is Large ribosomal subunit protein uL13m (MRPL13) from Bos taurus (Bovine).